The primary structure comprises 195 residues: Shikimate kinase (195 aa).

31–36 (GAGKSC) provides a ligand contact to ATP. S35 provides a ligand contact to Mg(2+). Substrate-binding residues include D53, R77, and G99. R137 provides a ligand contact to ATP. R156 lines the substrate pocket.

It belongs to the shikimate kinase family. Monomer. Requires Mg(2+) as cofactor.

The protein localises to the cytoplasm. It catalyses the reaction shikimate + ATP = 3-phosphoshikimate + ADP + H(+). The protein operates within metabolic intermediate biosynthesis; chorismate biosynthesis; chorismate from D-erythrose 4-phosphate and phosphoenolpyruvate: step 5/7. In terms of biological role, catalyzes the specific phosphorylation of the 3-hydroxyl group of shikimic acid using ATP as a cosubstrate. In Paramagnetospirillum magneticum (strain ATCC 700264 / AMB-1) (Magnetospirillum magneticum), this protein is Shikimate kinase.